Reading from the N-terminus, the 291-residue chain is Pyridoxal 5'-phosphate synthase subunit PdxS (291 aa).

Residue D23 coordinates D-ribose 5-phosphate. K80 serves as the catalytic Schiff-base intermediate with D-ribose 5-phosphate. G152 contacts D-ribose 5-phosphate. R164 provides a ligand contact to D-glyceraldehyde 3-phosphate. Residues G213 and G234 to S235 contribute to the D-ribose 5-phosphate site.

This sequence belongs to the PdxS/SNZ family. In terms of assembly, in the presence of PdxT, forms a dodecamer of heterodimers.

The catalysed reaction is aldehydo-D-ribose 5-phosphate + D-glyceraldehyde 3-phosphate + L-glutamine = pyridoxal 5'-phosphate + L-glutamate + phosphate + 3 H2O + H(+). It participates in cofactor biosynthesis; pyridoxal 5'-phosphate biosynthesis. Its function is as follows. Catalyzes the formation of pyridoxal 5'-phosphate from ribose 5-phosphate (RBP), glyceraldehyde 3-phosphate (G3P) and ammonia. The ammonia is provided by the PdxT subunit. Can also use ribulose 5-phosphate and dihydroxyacetone phosphate as substrates, resulting from enzyme-catalyzed isomerization of RBP and G3P, respectively. The polypeptide is Pyridoxal 5'-phosphate synthase subunit PdxS (Desulfitobacterium hafniense (strain DSM 10664 / DCB-2)).